The chain runs to 398 residues: Candidapepsin-2 (398 aa).

Positions 1-18 (MFLKNIFIGLAIALLVDA) are cleaved as a signal peptide. Positions 19–56 (TPTTTKRSAGFVALDFSVVKTPKAFPVTNGQEGKTSKR) are cleaved as a propeptide — activation peptide. The Peptidase A1 domain maps to 70–384 (YAADITVGSN…DLDNNEISLA (315 aa)). Residue Asp88 is part of the active site. 88–90 (DTG) serves as a coordination point for pepstatin A. Cysteines 103 and 115 form a disulfide. Pepstatin A is bound by residues 141–142 (GD) and 274–278 (DSGTT). Asp274 is a catalytic residue. Residues Cys312 and Cys350 are joined by a disulfide bond. Asn313 and Asn321 each carry an N-linked (GlcNAc...) asparagine glycan.

Belongs to the peptidase A1 family. Monomer. In terms of processing, O-glycosylated.

The protein localises to the secreted. The catalysed reaction is Preferential cleavage at the carboxyl of hydrophobic amino acids, but fails to cleave 15-Leu-|-Tyr-16, 16-Tyr-|-Leu-17 and 24-Phe-|-Phe-25 of insulin B chain. Activates trypsinogen, and degrades keratin.. The sequence is that of Candidapepsin-2 (SAP2) from Candida albicans (strain WO-1) (Yeast).